A 174-amino-acid polypeptide reads, in one-letter code: Sarcoplasmic calcium-binding protein (174 aa).

At Ser1 the chain carries N-acetylserine. 4 EF-hand domains span residues 3 to 38 (LWVQKMKTYFNRIDFDKDGAITRMDFESMAERFAKE), 55 to 90 (GVWDNFLTAVAGGKGIDETTFINSMKEMVKNPEAKS), 91 to 126 (VVEGPLPLFFRAVDTNEDNNISRDEYGIFFGMLGLD), and 127 to 160 (KTMAPASFDAIDTNNDGLLSLEEFVIAGSDFFMN). The Ca(2+) site is built by Asp16, Asp18, Asp20, and Asp27. Residues Asp104, Asn106, Asp108, Asn110, Glu115, Asp138, Asn140, Asp142, and Glu149 each coordinate Ca(2+).

Functionally, like parvalbumins, SCPs seem to be more abundant in fast contracting muscles, but no functional relationship can be established from this distribution. The sequence is that of Sarcoplasmic calcium-binding protein from Hediste diversicolor (Sandworm).